We begin with the raw amino-acid sequence, 256 residues long: Hydroxyacylglutathione hydrolase (256 aa).

Positions 57, 59, 61, 62, 115, 134, and 172 each coordinate Zn(2+).

Belongs to the metallo-beta-lactamase superfamily. Glyoxalase II family. As to quaternary structure, monomer. It depends on Zn(2+) as a cofactor.

It catalyses the reaction an S-(2-hydroxyacyl)glutathione + H2O = a 2-hydroxy carboxylate + glutathione + H(+). The protein operates within secondary metabolite metabolism; methylglyoxal degradation; (R)-lactate from methylglyoxal: step 2/2. Thiolesterase that catalyzes the hydrolysis of S-D-lactoyl-glutathione to form glutathione and D-lactic acid. The protein is Hydroxyacylglutathione hydrolase of Rhodospirillum rubrum (strain ATCC 11170 / ATH 1.1.1 / DSM 467 / LMG 4362 / NCIMB 8255 / S1).